Reading from the N-terminus, the 219-residue chain is ATP-dependent dethiobiotin synthetase BioD (219 aa).

An ATP-binding site is contributed by 12–17 (GVGKTI). Threonine 16 contacts Mg(2+). The active site involves lysine 32. ATP contacts are provided by residues aspartate 43 and 96-99 (ETSG). Mg(2+) is bound by residues aspartate 43 and glutamate 96.

This sequence belongs to the dethiobiotin synthetase family. In terms of assembly, homodimer. The cofactor is Mg(2+).

It is found in the cytoplasm. It carries out the reaction (7R,8S)-7,8-diammoniononanoate + CO2 + ATP = (4R,5S)-dethiobiotin + ADP + phosphate + 3 H(+). The protein operates within cofactor biosynthesis; biotin biosynthesis; biotin from 7,8-diaminononanoate: step 1/2. In terms of biological role, catalyzes a mechanistically unusual reaction, the ATP-dependent insertion of CO2 between the N7 and N8 nitrogen atoms of 7,8-diaminopelargonic acid (DAPA, also called 7,8-diammoniononanoate) to form a ureido ring. The protein is ATP-dependent dethiobiotin synthetase BioD of Chlamydia pneumoniae (Chlamydophila pneumoniae).